Consider the following 287-residue polypeptide: Hydroxysteroid 11-beta-dehydrogenase 1-like protein (287 aa).

The signal sequence occupies residues 1-20; the sequence is MMKPFGKVLCAAGSLAVLLA. Residues 41 to 67, 92 to 93, and 119 to 121 each bind NADP(+); these read GASA…TARR, DM, and NHI. Ser170 is a binding site for substrate. The active-site Proton acceptor is the Tyr183. Residues 183–187 and 216–222 contribute to the NADP(+) site; these read YSATK and GLIDTDA.

Belongs to the short-chain dehydrogenases/reductases (SDR) family.

It localises to the secreted. The catalysed reaction is cortisone + NADPH + H(+) = cortisol + NADP(+). Its function is as follows. Unidirectional NADP(+)-dependent cortisol dehydrogenase (in vitro). This is Hydroxysteroid 11-beta-dehydrogenase 1-like protein (HSD11B1L) from Gallus gallus (Chicken).